A 476-amino-acid chain; its full sequence is Adenylyl cyclase-associated protein 2 (476 aa).

The segment at 223 to 322 is disordered; that stretch reads SILSSGPGLP…KSNSPQKHTP (100 aa). A compositionally biased stretch (pro residues) spans 230 to 247; that stretch reads GLPPPPPPPPPPGPPPPF. The segment covering 288–299 has biased composition (polar residues); it reads KNPSLRAQGQIR. Phosphoserine occurs at positions 300 and 308. A compositionally biased stretch (low complexity) spans 300–317; that stretch reads SPTKTHTPSPTSPKSNSP. The 138-residue stretch at 317 to 454 folds into the C-CAP/cofactor C-like domain; sequence PQKHTPVLEL…QDDDYREFPI (138 aa).

This sequence belongs to the CAP family. As to expression, expressed in the heart, skeletal muscle, and brain.

It is found in the cell membrane. Its function is as follows. Involved in the regulation of actin polymerization. The chain is Adenylyl cyclase-associated protein 2 (Cap2) from Mus musculus (Mouse).